We begin with the raw amino-acid sequence, 498 residues long: Thiamine transporter 1 (498 aa).

An N-acetylmethionine modification is found at M1. At 1–28 the chain is on the cytoplasmic side; that stretch reads MDVPARVSRRAAAAAARMLLRTARVPRE. The helical transmembrane segment at 29–46 threads the bilayer; sequence CWFLPTALLCAYGFFANL. At 47-71 the chain is on the extracellular side; the sequence is RPSEPFLTPYLLGPDKNLTERQVYN. N63 carries N-linked (GlcNAc...) asparagine glycosylation. Residues 72–92 traverse the membrane as a helical segment; sequence EIYPVWTYSYLLLLFPVFLAT. The Cytoplasmic segment spans residues 93–105; sequence DYLRYKPVILLQG. Residues 106–126 traverse the membrane as a helical segment; it reads LSLIVTWFMLLYAQGLLAIQF. The Extracellular segment spans residues 127 to 128; that stretch reads LE. The chain crosses the membrane as a helical span at residues 129-149; sequence FFYGIATATEIAYYSYIYTVV. Topologically, residues 150 to 164 are cytoplasmic; it reads DLGMYQKVTSYCRSA. The chain crosses the membrane as a helical span at residues 165–185; that stretch reads TLVGFTVGSVLGQILVSVVGW. A topological domain (extracellular) is located at residue S186. A helical membrane pass occupies residues 187 to 207; sequence LFSLNVISLTCVSVAFAVAWF. At 208-295 the chain is on the cytoplasmic side; the sequence is LPMPQKSLFF…DFLMCYSSRP (88 aa). At S222 the chain carries Phosphoserine. The chain crosses the membrane as a helical span at residues 296-316; sequence LLCWSVWWALSTCGYFQVVNY. The Extracellular segment spans residues 317-334; that stretch reads AQGLWEKVMPSQNADIYN. A helical membrane pass occupies residues 335–355; it reads GGVEAVSTLLGASAVFAVGYI. Residues 356 to 360 are Cytoplasmic-facing; that stretch reads KLSWS. Residues 361–381 form a helical membrane-spanning segment; that stretch reads TWGEMTLFLCSLLIAAAVYVM. Residues 382–386 are Extracellular-facing; the sequence is DTVQS. Residues 387–407 form a helical membrane-spanning segment; that stretch reads IWVCYASYVVFRIIYMVLITI. The Cytoplasmic segment spans residues 408–423; it reads ATFQIAANLSMERYAL. The chain crosses the membrane as a helical span at residues 424 to 444; sequence VFGVNTFIALALQTLLTLIVV. Topologically, residues 445-456 are extracellular; the sequence is DARGLGLCITTQ. A helical membrane pass occupies residues 457–477; that stretch reads FLIYASYFAAISVVFLANGIV. Topologically, residues 478-498 are cytoplasmic; the sequence is SIIKKCRKQEDPSSSPQASTS.

Belongs to the reduced folate carrier (RFC) transporter (TC 2.A.48) family. Interacts with TSPAN1; this interaction increases the stability of SLC19A2. Interacts with TMEM63B. As to expression, expressed in liver. Expressed in cochlear hair cells and duodenum (at protein level). Detected in pancreatic acinar cells (at protein level). Also expressed strongly in pancreatic islet cells. Expressed in the testis. Very highly expressed in liver, and also detected at lower levels in heart, testis, kidney, brain and spleen. In terms of tissue distribution, expressed at low levels in liver and spleen.

It localises to the cell membrane. It catalyses the reaction thiamine(out) + H(+)(in) = thiamine(in) + H(+)(out). The enzyme catalyses pyridoxine(out) + n H(+)(out) = pyridoxine(in) + n H(+)(in). Functionally, high-affinity transporter for the intake of thiamine. Essential for spermatogenesis. Mediates H(+)-dependent pyridoxine transport. This chain is Thiamine transporter 1, found in Mus musculus (Mouse).